Reading from the N-terminus, the 389-residue chain is Pre-mRNA-splicing factor PRP46 (389 aa).

WD repeat units follow at residues 83 to 123 (AHQG…LKAV), 126 to 165 (GHVL…SDAG), 173 to 212 (GHLG…EAMT), 215 to 254 (GHTN…TELL), 257 to 298 (NHSK…NEFG), 308 to 347 (DNSR…LQQS), and 356 to 389 (PEQS…GTSY).

This sequence belongs to the WD repeat PRL1/PRL2 family. As to quaternary structure, associated with the spliceosome.

The protein localises to the cytoplasm. It localises to the nucleus. In terms of biological role, involved in pre-mRNA splicing and required for cell cycle progression at G2/M. This chain is Pre-mRNA-splicing factor PRP46 (PRP46), found in Candida albicans (strain SC5314 / ATCC MYA-2876) (Yeast).